A 191-amino-acid polypeptide reads, in one-letter code: MYVVLEGVDGAGKSTQVGLLKDRFKNALVTKEPGGTRMGEHLRHIALNENISELARAFLFLSDRAEHIESVIKPALKEKKLIISDRSLISGMAYSQFSSLELNLLATQSVLPDKIILLLIDKEGLKQRLSHKSLDKIENQGTEKLLTIQQKLKTHAHALKEQFGCEVLELDAQKSVWDLHRQIVAFIECVV.

7 to 14 provides a ligand contact to ATP; that stretch reads GVDGAGKS.

The protein belongs to the thymidylate kinase family.

The catalysed reaction is dTMP + ATP = dTDP + ADP. Its function is as follows. Phosphorylation of dTMP to form dTDP in both de novo and salvage pathways of dTTP synthesis. The protein is Thymidylate kinase of Helicobacter pylori (strain Shi470).